The chain runs to 1258 residues: Plasma membrane calcium-transporting ATPase 3 (1258 aa).

The segment covering 1–19 (MGDMANSSIEFHPKPQQQR) has biased composition (polar residues). Residues 1 to 22 (MGDMANSSIEFHPKPQQQREVP) are disordered. At 1-97 (MGDMANSSIE…NFIPPKQPKT (97 aa)) the chain is on the cytoplasmic side. At S8 the chain carries Phosphoserine. The chain crosses the membrane as a helical span at residues 98-118 (FLQLVWEALQDVTLIILEVAA). Topologically, residues 119-155 (IVSLGLSFYAPPGEESEACGNVSGGAEDEGEAEAGWI) are extracellular. Residues 156 to 176 (EGAAILLSVICVVLVTAFNDW) form a helical membrane-spanning segment. The Cytoplasmic segment spans residues 177 to 364 (SKEKQFRGLQ…KEKSVLQGKL (188 aa)). 2 disordered regions span residues 298-328 (EEEKKDKKGKQQDGAMESSQTKAKKQDGAVA) and 335-354 (KSAEGGEMEEREKKKANVPK). 2 stretches are compositionally biased toward basic and acidic residues: residues 299-308 (EEKKDKKGKQ) and 342-354 (MEEREKKKANVPK). The helical transmembrane segment at 365–384 (TKLAVQIGKAGLVMSAITVI) threads the bilayer. The Extracellular segment spans residues 385 to 417 (ILVLYFVIETFVVDGRVWLAECTPVYVQYFVKF). Residues 418-435 (FIIGVTVLVVAVPEGLPL) form a helical membrane-spanning segment. At 436–849 (AVTISLAYSV…MWGRNVYDSI (414 aa)) the chain is on the cytoplasmic side. The active-site 4-aspartylphosphate intermediate is D473. Positions 794 and 798 each coordinate Mg(2+). A helical transmembrane segment spans residues 850 to 869 (SKFLQFQLTVNVVAVIVAFT). Residues 870–879 (GACITQDSPL) lie on the Extracellular side of the membrane. The helical transmembrane segment at 880–900 (KAVQMLWVNLIMDTFASLALA) threads the bilayer. Topologically, residues 901-920 (TEPPTESLLLRKPYGRDKPL) are cytoplasmic. Residues 921 to 943 (ISRTMMKNILGHAVYQLTIIFTL) form a helical membrane-spanning segment. The Extracellular portion of the chain corresponds to 944-961 (LFVGELFFDIDSGRNAPL). The chain crosses the membrane as a helical span at residues 962 to 983 (HSPPSEHYTIIFNTFVMMQLFN). Residues 984–1002 (EINARKIHGERNVFDGIFS) lie on the Cytoplasmic side of the membrane. The helical transmembrane segment at 1003–1024 (NPIFCTIVLGTFGIQIVIVQFG) threads the bilayer. The Extracellular portion of the chain corresponds to 1025 to 1034 (GKPFSCSPLS). The helical transmembrane segment at 1035–1056 (TEQWLWCLFVGVGELVWGQVIA) threads the bilayer. Over 1057–1258 (TIPTSQLKCL…SPLHSMETSL (202 aa)) the chain is Cytoplasmic. Residue T1079 is modified to Phosphothreonine. The calmodulin-binding subdomain A stretch occupies residues 1097-1114 (LRRGQILWFRGLNRIQTQ). At T1113 the chain carries Phosphothreonine; by PKC. The segment at 1115-1124 (MEVVSTFKRS) is calmodulin-binding subdomain B. A Phosphoserine modification is found at S1126. The disordered stretch occupies residues 1204 to 1258 (ENEERLRAPPPPPPNQNNNAIDSGIYLTTHATKSATSSAFSSRPGSPLHSMETSL). Low complexity predominate over residues 1231 to 1245 (TTHATKSATSSAFSS).

This sequence belongs to the cation transport ATPase (P-type) (TC 3.A.3) family. Type IIB subfamily. As to quaternary structure, interacts with PDZD11. Interacts (via N-terminus) with YWHAE. Expressed predominantly in brain and skeletal muscle. Expressed in the molecular layer of the cerebellar cortex, in particular in granule cells (at protein level). Expressed in aldosterone producing glomerulosa cells of adrenal glands (at protein level). Detected at low levels in various tissues including testis, stomach, small intestine, and large intestine. In terms of tissue distribution, most abundant form in brain and most other tissues. As to expression, most abundant form in skeletal muscle and is also found in brain and at low levels in testis and kidney.

It is found in the cell membrane. The protein resides in the presynaptic cell membrane. The catalysed reaction is Ca(2+)(in) + ATP + H2O = Ca(2+)(out) + ADP + phosphate + H(+). In terms of biological role, ATP-driven Ca(2+) ion pump involved in the maintenance of basal intracellular Ca(2+) levels at the presynaptic terminals. Uses ATP as an energy source to transport cytosolic Ca(2+) ions across the plasma membrane to the extracellular compartment. May counter-transport protons, but the mechanism and the stoichiometry of this Ca(2+)/H(+) exchange remains to be established. In Rattus norvegicus (Rat), this protein is Plasma membrane calcium-transporting ATPase 3 (Atp2b3).